A 461-amino-acid chain; its full sequence is Ornithine decarboxylase (461 aa).

Lys-69 is modified (N6-(pyridoxal phosphate)lysine). Residues Ser-200, Gly-237, and 274–277 (EPGR) each bind pyridoxal 5'-phosphate. Residue Ser-303 is modified to Phosphoserine; by CK2. Position 331 to 332 (331 to 332 (YD)) interacts with substrate. Cys-360 functions as the Proton donor; shared with dimeric partner in the catalytic mechanism. Cys-360 is modified (S-nitrosocysteine). Residue Asp-361 participates in substrate binding. Tyr-389 serves as a coordination point for pyridoxal 5'-phosphate.

It belongs to the Orn/Lys/Arg decarboxylase class-II family. Homodimer. Only the dimer is catalytically active, as the active sites are constructed of residues from both monomers. Does not form a heterodimer with AZIN2. It depends on pyridoxal 5'-phosphate as a cofactor. Expressed during testis development in the outer part of the seminiferous tubules.

It carries out the reaction L-ornithine + H(+) = putrescine + CO2. Its pathway is amine and polyamine biosynthesis; putrescine biosynthesis via L-ornithine pathway; putrescine from L-ornithine: step 1/1. Inhibited by antizymes (AZs) OAZ1, OAZ2 and OAZ3 in response to polyamine levels. AZs inhibit the assembly of the functional homodimer by binding to ODC monomers. Additionally, OAZ1 targets ODC monomers for ubiquitin-independent proteolytic destruction by the 26S proteasome. In terms of biological role, catalyzes the first and rate-limiting step of polyamine biosynthesis that converts ornithine into putrescine, which is the precursor for the polyamines, spermidine and spermine. Polyamines are essential for cell proliferation and are implicated in cellular processes, ranging from DNA replication to apoptosis. The polypeptide is Ornithine decarboxylase (Odc1) (Mus musculus (Mouse)).